The following is a 126-amino-acid chain: Putative lipoprotein LprD (126 aa).

A signal peptide spans 1–19; that stretch reads MSTTRRRRPALVALVTIAA. A lipid anchor (N-palmitoyl cysteine) is attached at Cys20. Cys20 is lipidated: S-diacylglycerol cysteine. The chain crosses the membrane as a helical span at residues 44-64; that stretch reads GYALQWPLFAGFCLYTYHNFV.

To M.tuberculosis Rv1343c.

It is found in the cell membrane. The protein is Putative lipoprotein LprD (lprD) of Mycobacterium leprae (strain TN).